The following is a 767-amino-acid chain: Polyketide biosynthesis protein PksE (767 aa).

Residues 1–312 (MITYVFPGQG…QRNVQAGITA (312 aa)) form an acyl transferase region. Active-site residues include Ser-87 and His-193.

This sequence in the N-terminal section; belongs to the FabD family.

Its subcellular location is the cytoplasm. The enzyme catalyses holo-[ACP] + malonyl-CoA = malonyl-[ACP] + CoA. It functions in the pathway antibiotic biosynthesis; bacillaene biosynthesis. Probably involved in some intermediate steps for the synthesis of the antibiotic polyketide bacillaene which is involved in secondary metabolism. Probably has an acyl transferase activity and could also have a flavin mononucleotide-dependent oxidoreductase activity. In Bacillus subtilis (strain 168), this protein is Polyketide biosynthesis protein PksE (pksE).